Reading from the N-terminus, the 142-residue chain is Large ribosomal subunit protein uL13 (142 aa).

Belongs to the universal ribosomal protein uL13 family. In terms of assembly, part of the 50S ribosomal subunit.

This protein is one of the early assembly proteins of the 50S ribosomal subunit, although it is not seen to bind rRNA by itself. It is important during the early stages of 50S assembly. The polypeptide is Large ribosomal subunit protein uL13 (Cupriavidus metallidurans (strain ATCC 43123 / DSM 2839 / NBRC 102507 / CH34) (Ralstonia metallidurans)).